The primary structure comprises 588 residues: Ankyrin repeat and SOCS box protein 15 (588 aa).

11 ANK repeats span residues 75-104 (KGWFPLHEAVVQPIQQILEVVLDASYKTLW), 110-139 (DGETPLTLAVKAGLVENVRTLLEKGVWPNT), 143-172 (KGETPLLLAIKRGSYDMVSALLKHNTSLDQ), 176-205 (KRWSAMHEAAKQGHKDIIALLLNNGGNVHL), 209-238 (FGVTPLGVAAEYGHCDVLEHLIHKGGDVLA), 242-271 (DGASVLFEAAGGGNPDCISLLLEYGGSGNI), 275-304 (AGHLPIHRAAYEGHYLALKYLIPVTSKHAI), 307-336 (SGLTPIHSAADGQNAQCLELLIENGFDVNS), 349-378 (ERKTALYFAVCNNDILCTEILLAAGADPNL), 379-408 (DPLNCLLVAVRANNHEIVRLLLAHGANVNC), and 416-444 (TRFPSAIQYALNDEVMLRLLLNNGYQVEM). Residues 524-579 (WPEIRQILENPCSLKHLCRLKIRRLMGLQRLCQPTLMEKLSLPPTIQRYILFKEYD) form the SOCS box domain.

The protein belongs to the ankyrin SOCS box (ASB) family.

Its pathway is protein modification; protein ubiquitination. Its function is as follows. May be a substrate-recognition component of a SCF-like ECS (Elongin-Cullin-SOCS-box protein) E3 ubiquitin-protein ligase complex which mediates the ubiquitination and subsequent proteasomal degradation of target proteins. In Bos taurus (Bovine), this protein is Ankyrin repeat and SOCS box protein 15 (ASB15).